The chain runs to 340 residues: Aurora kinase A- and ninein-interacting protein (340 aa).

The interval 175-340 (QREAKRKGEG…DSEGNRVIRH (166 aa)) is interaction with AURKA. The span at 178 to 190 (AKRKGEGLRESKT) shows a compositional bias: basic and acidic residues. Residues 178 to 209 (AKRKGEGLRESKTDCPGMGSHIRPPGSKCHQP) form a disordered region. The tract at residues 266–340 (RDSWSQLFTE…DSEGNRVIRH (75 aa)) is interaction with RBBP8/CtIP. The residue at position 277 (Ser-277) is a Phosphoserine. Residues 293–317 (DVTNARNQGSGQFPDSPQAQGQDGP) form a disordered region. The segment covering 296-313 (NARNQGSGQFPDSPQAQG) has biased composition (polar residues).

It belongs to the AUNIP family. As to quaternary structure, interacts (via C-terminus) with AURKA (via C-terminus). Interacts (via N-terminus) with NIN; this interaction blocks NIN phosphorylation by both AURKA and GSK3B. Identified in a complex with NIN and AURKA. Interacts with RBBP8/CtIP.

It is found in the nucleus. It localises to the chromosome. Its subcellular location is the cytoplasm. The protein localises to the cytoskeleton. The protein resides in the microtubule organizing center. It is found in the centrosome. It localises to the spindle pole. Its function is as follows. DNA-binding protein that accumulates at DNA double-strand breaks (DSBs) following DNA damage and promotes DNA resection and homologous recombination. Serves as a sensor of DNA damage: binds DNA with a strong preference for DNA substrates that mimic structures generated at stalled replication forks, and anchors RBBP8/CtIP to DSB sites to promote DNA end resection and ensuing homologous recombination repair. Inhibits non-homologous end joining (NHEJ). Required for the dynamic movement of AURKA at the centrosomes and spindle apparatus during the cell cycle. In Mus musculus (Mouse), this protein is Aurora kinase A- and ninein-interacting protein.